The sequence spans 655 residues: Protein movement modulator (655 aa).

Residues 1 to 54 (MEQPSILVKILHSIPHVNYTFRRVNDTFNPDSDVYLEPTNNKLQCQQKGIELQS) lie on the Extracellular side of the membrane. Residues Asn-18 and Asn-25 are each glycosylated (N-linked (GlcNAc...) asparagine). The helical transmembrane segment at 55–75 (LVILASIPAGLLIGSLLGLLL) threads the bilayer. Topologically, residues 76-95 (YLLTRCCDRRQRKPSAQRCQ) are cytoplasmic. A helical transmembrane segment spans residues 96–116 (SCSLVIITLMTCAAIGLGLYG). Topologically, residues 117–231 (NDDFHNGLLQ…GEFYESIRWP (115 aa)) are extracellular. Residues Asn-171, Asn-188, and Asn-211 are each glycosylated (N-linked (GlcNAc...) asparagine). The helical transmembrane segment at 232-252 (ATLAFLTVLLLLCTVLVIGVA) threads the bilayer. Topologically, residues 253-258 (RRSRCT) are cytoplasmic. Residues 259–279 (LIFFSVSGLFCIIICWLLAGV) traverse the membrane as a helical segment. Residues 280–401 (YLASSVAAGD…ALRGLCGGGL (122 aa)) are Extracellular-facing. N-linked (GlcNAc...) asparagine glycosylation is found at Asn-326 and Asn-372. Residues 402–422 (LGLSLMMVAGLLTSFLLTILV) traverse the membrane as a helical segment. Residues 423–655 (YADSHAWIYL…CKTLESNDFY (233 aa)) are Cytoplasmic-facing. The tract at residues 446 to 576 (APLFPASNAP…NNHYNNTQHR (131 aa)) is disordered. Residues 450–464 (PASNAPSASISPTAP) are compositionally biased toward low complexity. Polar residues predominate over residues 465-480 (LSTGTINRTLLHHQQA). Positions 482–509 (SGGGSGTLPGSGGGAGAGGGVGANGHNG) are enriched in gly residues. 2 stretches are compositionally biased toward low complexity: residues 526-539 (SPSSQSSHTSSTAT) and 546-576 (SYHNSHQQHNNHLYSNHYSHSNNHYNNTQHR). A phosphoserine mark is found at Ser-597 and Ser-599.

This sequence belongs to the tweety family.

The protein localises to the cell membrane. It carries out the reaction chloride(in) = chloride(out). Its function is as follows. Probable large-conductance Ca(2+)-activated chloride channel. Modulator of embryonic movement. This Drosophila melanogaster (Fruit fly) protein is Protein movement modulator.